Here is a 224-residue protein sequence, read N- to C-terminus: Putative MgpC-like protein MPN_150 (224 aa).

Belongs to the MgpC family.

The protein is Putative MgpC-like protein MPN_150 of Mycoplasma pneumoniae (strain ATCC 29342 / M129 / Subtype 1) (Mycoplasmoides pneumoniae).